The sequence spans 214 residues: MKKLCAIFGGNFDPIHYGHINLAEKLAKDISIKKIILLPNNYPPHRKKTQTSISDKIKMIKLAIHNNPLFEISYLETKKNNIFYTIDTLKKIRKKISHLEPLCFIIGEDNLQTFYLWKNWREILLYSHLLIYPRKHKKQKNNELEKWIHSNTVYDCNLLHKQPCGLIFFSDAPCINISSSRIRKNYFYGKNSHSLLPSIVNNYILLKKLYYTNQ.

The protein belongs to the NadD family.

The catalysed reaction is nicotinate beta-D-ribonucleotide + ATP + H(+) = deamido-NAD(+) + diphosphate. It participates in cofactor biosynthesis; NAD(+) biosynthesis; deamido-NAD(+) from nicotinate D-ribonucleotide: step 1/1. Catalyzes the reversible adenylation of nicotinate mononucleotide (NaMN) to nicotinic acid adenine dinucleotide (NaAD). The polypeptide is Probable nicotinate-nucleotide adenylyltransferase (Buchnera aphidicola subsp. Acyrthosiphon pisum (strain Tuc7)).